Consider the following 157-residue polypeptide: SsrA-binding protein (157 aa).

It belongs to the SmpB family.

The protein localises to the cytoplasm. Its function is as follows. Required for rescue of stalled ribosomes mediated by trans-translation. Binds to transfer-messenger RNA (tmRNA), required for stable association of tmRNA with ribosomes. tmRNA and SmpB together mimic tRNA shape, replacing the anticodon stem-loop with SmpB. tmRNA is encoded by the ssrA gene; the 2 termini fold to resemble tRNA(Ala) and it encodes a 'tag peptide', a short internal open reading frame. During trans-translation Ala-aminoacylated tmRNA acts like a tRNA, entering the A-site of stalled ribosomes, displacing the stalled mRNA. The ribosome then switches to translate the ORF on the tmRNA; the nascent peptide is terminated with the 'tag peptide' encoded by the tmRNA and targeted for degradation. The ribosome is freed to recommence translation, which seems to be the essential function of trans-translation. This chain is SsrA-binding protein, found in Methylobacterium nodulans (strain LMG 21967 / CNCM I-2342 / ORS 2060).